Here is a 134-residue protein sequence, read N- to C-terminus: Translation initiation factor 2 subunit beta (134 aa).

Belongs to the eIF-2-beta/eIF-5 family. As to quaternary structure, heterotrimer composed of an alpha, a beta and a gamma chain.

Functionally, eIF-2 functions in the early steps of protein synthesis by forming a ternary complex with GTP and initiator tRNA. The sequence is that of Translation initiation factor 2 subunit beta from Pyrobaculum neutrophilum (strain DSM 2338 / JCM 9278 / NBRC 100436 / V24Sta) (Thermoproteus neutrophilus).